Here is a 201-residue protein sequence, read N- to C-terminus: Akirin-2 (201 aa).

Phosphoserine is present on residues S18 and S21. A Nuclear localization signal motif is present at residues 22–27 (PKRRRC). The residue at position 55 (S55) is a Phosphoserine. An SYVS motif motif is present at residues 198–201 (SYVS).

The protein belongs to the akirin family. In terms of assembly, homodimer. Interacts with IPO9; the interaction is direct. Associates with 20S and 26S proteasomes. Interacts with SMARCD1; promoting SWI/SNF complex recruitment. Interacts with NFKBIZ. Interacts with YWHAB. In terms of processing, polyubiquitinated. Polyubiquitination is dependent of UBR5 that extends pre-ubiquitinated AKIRIN2. Highly expressed in testis, cerebrum and cerebellum, and barely detectable in liver, heart, spleen and muscle. Also highly expressed in various tumor cells from hepatoma, glioblastoma and pheochromocytoma.

It is found in the nucleus. Its subcellular location is the cytoplasm. It localises to the membrane. In terms of biological role, molecular adapter that acts as a bridge between a variety of multiprotein complexes, and which is involved in embryonic development, immunity, myogenesis and brain development. Plays a key role in nuclear protein degradation by promoting import of proteasomes into the nucleus: directly binds to fully assembled 20S proteasomes at one end and to nuclear import receptor IPO9 at the other end, bridging them together and mediating the import of pre-assembled proteasome complexes through the nuclear pore. Involved in innate immunity by regulating the production of interleukin-6 (IL6) downstream of Toll-like receptor (TLR): acts by bridging the NF-kappa-B inhibitor NFKBIZ and the SWI/SNF complex, leading to promote induction of IL6. Also involved in adaptive immunity by promoting B-cell activation. Involved in brain development: required for the survival and proliferation of cerebral cortical progenitor cells. Involved in myogenesis: required for skeletal muscle formation and skeletal development, possibly by regulating expression of muscle differentiation factors. Also plays a role in facilitating interdigital tissue regression during limb development. The polypeptide is Akirin-2 (Rattus norvegicus (Rat)).